Consider the following 590-residue polypeptide: Phosphomethylpyrimidine synthase (590 aa).

Substrate is bound by residues Asn197, Met226, Tyr255, His291, 311–313 (SRG), 352–355 (DGLR), and Glu391. His395 is a Zn(2+) binding site. Tyr418 contacts substrate. Residue His459 coordinates Zn(2+). Residues Cys539, Cys542, and Cys547 each coordinate [4Fe-4S] cluster.

Belongs to the ThiC family. [4Fe-4S] cluster is required as a cofactor.

The catalysed reaction is 5-amino-1-(5-phospho-beta-D-ribosyl)imidazole + S-adenosyl-L-methionine = 4-amino-2-methyl-5-(phosphooxymethyl)pyrimidine + CO + 5'-deoxyadenosine + formate + L-methionine + 3 H(+). Its pathway is cofactor biosynthesis; thiamine diphosphate biosynthesis. Catalyzes the synthesis of the hydroxymethylpyrimidine phosphate (HMP-P) moiety of thiamine from aminoimidazole ribotide (AIR) in a radical S-adenosyl-L-methionine (SAM)-dependent reaction. The chain is Phosphomethylpyrimidine synthase from Bacillus velezensis (strain DSM 23117 / BGSC 10A6 / LMG 26770 / FZB42) (Bacillus amyloliquefaciens subsp. plantarum).